Reading from the N-terminus, the 451-residue chain is Tubulin alpha chain (451 aa).

The MREC motif signature appears at Met-1–Cys-4. Residue Gln-11 coordinates GTP. At Lys-40 the chain carries N6-acetyllysine. Residues Glu-71, Ser-140, Gly-144, Thr-145, Thr-179, Asn-206, and Asn-228 each contribute to the GTP site. Glu-71 is a Mg(2+) binding site. Residue Glu-254 is part of the active site. Residues Tyr-432 to Tyr-451 are disordered. Glu-445 is modified (5-glutamyl polyglutamate).

This sequence belongs to the tubulin family. Dimer of alpha and beta chains. A typical microtubule is a hollow water-filled tube with an outer diameter of 25 nm and an inner diameter of 15 nM. Alpha-beta heterodimers associate head-to-tail to form protofilaments running lengthwise along the microtubule wall with the beta-tubulin subunit facing the microtubule plus end conferring a structural polarity. Microtubules usually have 13 protofilaments but different protofilament numbers can be found in some organisms and specialized cells. The cofactor is Mg(2+). Some glutamate residues at the C-terminus are polyglycylated, resulting in polyglycine chains on the gamma-carboxyl group. Glycylation is mainly limited to tubulin incorporated into axonemes (cilia and flagella) whereas glutamylation is prevalent in neuronal cells, centrioles, axonemes, and the mitotic spindle. Both modifications can coexist on the same protein on adjacent residues, and lowering polyglycylation levels increases polyglutamylation, and reciprocally. The precise function of polyglycylation is still unclear. In terms of processing, some glutamate residues at the C-terminus are polyglutamylated, resulting in polyglutamate chains on the gamma-carboxyl group. Polyglutamylation plays a key role in microtubule severing by spastin (SPAST). SPAST preferentially recognizes and acts on microtubules decorated with short polyglutamate tails: severing activity by SPAST increases as the number of glutamates per tubulin rises from one to eight, but decreases beyond this glutamylation threshold. Post-translationally, acetylation of alpha chains at Lys-40 is located inside the microtubule lumen. This modification has been correlated with increased microtubule stability, intracellular transport and ciliary assembly. Undergoes a tyrosination/detyrosination cycle, the cyclic removal and re-addition of a C-terminal tyrosine residue by the enzymes tubulin tyrosine carboxypeptidase (MATCAP, VASH1 or VASH2) and tubulin tyrosine ligase (TTL), respectively. In terms of processing, tyrosination promotes microtubule interaction with CAP-Gly microtubule plus-end tracking proteins. Tyrosinated tubulins regulate the initiation of dynein-driven motility. Post-translationally, detyrosination is involved in metaphase plate congression by guiding chromosomes during mitosis. Detyrosination increases microtubules-dependent mechanotransduction in dystrophic cardiac and skeletal muscle. In cardiomyocytes, detyrosinated microtubules are required to resist to contractile compression during contraction.

It localises to the cytoplasm. It is found in the cytoskeleton. It carries out the reaction GTP + H2O = GDP + phosphate + H(+). In terms of biological role, tubulin is the major constituent of microtubules, a cylinder consisting of laterally associated linear protofilaments composed of alpha- and beta-tubulin heterodimers. Microtubules grow by the addition of GTP-tubulin dimers to the microtubule end, where a stabilizing cap forms. Below the cap, tubulin dimers are in GDP-bound state, owing to GTPase activity of alpha-tubulin. This chain is Tubulin alpha chain, found in Torpedo marmorata (Marbled electric ray).